The following is a 284-amino-acid chain: Bifunctional protein FolD (284 aa).

NADP(+)-binding positions include 166 to 168 and Ile232; that span reads GAS.

The protein belongs to the tetrahydrofolate dehydrogenase/cyclohydrolase family. In terms of assembly, homodimer.

It carries out the reaction (6R)-5,10-methylene-5,6,7,8-tetrahydrofolate + NADP(+) = (6R)-5,10-methenyltetrahydrofolate + NADPH. It catalyses the reaction (6R)-5,10-methenyltetrahydrofolate + H2O = (6R)-10-formyltetrahydrofolate + H(+). Its pathway is one-carbon metabolism; tetrahydrofolate interconversion. Its function is as follows. Catalyzes the oxidation of 5,10-methylenetetrahydrofolate to 5,10-methenyltetrahydrofolate and then the hydrolysis of 5,10-methenyltetrahydrofolate to 10-formyltetrahydrofolate. The protein is Bifunctional protein FolD of Shewanella pealeana (strain ATCC 700345 / ANG-SQ1).